A 456-amino-acid chain; its full sequence is ATP-dependent protease ATPase subunit HslU (456 aa).

ATP-binding positions include Val-18, 60 to 65, Asp-269, Glu-334, and Arg-406; that span reads GVGKTE.

This sequence belongs to the ClpX chaperone family. HslU subfamily. In terms of assembly, a double ring-shaped homohexamer of HslV is capped on each side by a ring-shaped HslU homohexamer. The assembly of the HslU/HslV complex is dependent on binding of ATP.

The protein resides in the cytoplasm. Its function is as follows. ATPase subunit of a proteasome-like degradation complex; this subunit has chaperone activity. The binding of ATP and its subsequent hydrolysis by HslU are essential for unfolding of protein substrates subsequently hydrolyzed by HslV. HslU recognizes the N-terminal part of its protein substrates and unfolds these before they are guided to HslV for hydrolysis. This is ATP-dependent protease ATPase subunit HslU from Desulfosudis oleivorans (strain DSM 6200 / JCM 39069 / Hxd3) (Desulfococcus oleovorans).